A 206-amino-acid chain; its full sequence is Superoxide dismutase [Mn] (206 aa).

Residues His-27, His-82, Asp-168, and His-172 each contribute to the Mn(2+) site.

It belongs to the iron/manganese superoxide dismutase family. In terms of assembly, homodimer. Requires Mn(2+) as cofactor.

The enzyme catalyses 2 superoxide + 2 H(+) = H2O2 + O2. In terms of biological role, destroys superoxide anion radicals which are normally produced within the cells and which are toxic to biological systems. This chain is Superoxide dismutase [Mn] (sodA), found in Escherichia coli O157:H7.